The chain runs to 495 residues: Phage-like element PBSX protein XkdE (495 aa).

The protein belongs to the phage portal family. PBSX subfamily.

This Bacillus subtilis (strain 168) protein is Phage-like element PBSX protein XkdE (xkdE).